A 33-amino-acid chain; its full sequence is U1-pseudomyrmecitoxin-Pt1 subunit LS1 (33 aa).

Belongs to the myrmexin family. In terms of assembly, heterodimer composed of subunit LS1 and subunit SS1 (U1-PSDTX-Pt1b), heterodimer composed of subunit LS1 and SS2 (U1-PSDTX-Pt1b), and heterodimer composed of subunit LS1 and SS3; disulfide-linked. In terms of tissue distribution, expressed by the venom gland.

It localises to the secreted. This heterodimer may have anti-inflammatory properties, since the myrmexin complex (composed of 6 SS-LS heterodimers) inhibits carrageenin-induced edema in a dose-dependent manner (after subcutaneous injection into rats). The sequence is that of U1-pseudomyrmecitoxin-Pt1 subunit LS1 from Pseudomyrmex triplarinus (Ant).